The chain runs to 152 residues: UPF0225 protein YchJ (152 aa).

Belongs to the UPF0225 family.

This is UPF0225 protein YchJ from Shigella boydii serotype 18 (strain CDC 3083-94 / BS512).